Reading from the N-terminus, the 640-residue chain is Threonine--tRNA ligase (640 aa).

In terms of domain architecture, TGS spans 1–63 (MSSVTVTLPD…SEDCEIEIVT (63 aa)). Residues 242 to 533 (DHRKLGREMD…LIEHYNGRFP (292 aa)) are catalytic. Zn(2+) contacts are provided by C334, H385, and H510.

The protein belongs to the class-II aminoacyl-tRNA synthetase family. In terms of assembly, homodimer. Zn(2+) serves as cofactor.

Its subcellular location is the cytoplasm. The catalysed reaction is tRNA(Thr) + L-threonine + ATP = L-threonyl-tRNA(Thr) + AMP + diphosphate + H(+). Functionally, catalyzes the attachment of threonine to tRNA(Thr) in a two-step reaction: L-threonine is first activated by ATP to form Thr-AMP and then transferred to the acceptor end of tRNA(Thr). The protein is Threonine--tRNA ligase of Halobacterium salinarum (strain ATCC 29341 / DSM 671 / R1).